Here is a 984-residue protein sequence, read N- to C-terminus: Glycine dehydrogenase (decarboxylating) (984 aa).

N6-(pyridoxal phosphate)lysine is present on K702.

It belongs to the GcvP family. As to quaternary structure, the glycine cleavage system is composed of four proteins: P, T, L and H. Requires pyridoxal 5'-phosphate as cofactor.

The catalysed reaction is N(6)-[(R)-lipoyl]-L-lysyl-[glycine-cleavage complex H protein] + glycine + H(+) = N(6)-[(R)-S(8)-aminomethyldihydrolipoyl]-L-lysyl-[glycine-cleavage complex H protein] + CO2. In terms of biological role, the glycine cleavage system catalyzes the degradation of glycine. The P protein binds the alpha-amino group of glycine through its pyridoxal phosphate cofactor; CO(2) is released and the remaining methylamine moiety is then transferred to the lipoamide cofactor of the H protein. The protein is Glycine dehydrogenase (decarboxylating) of Xanthomonas oryzae pv. oryzae (strain MAFF 311018).